Here is a 3933-residue protein sequence, read N- to C-terminus: Circularly permutated Ras protein 2 (3933 aa).

Residues 12–46 (VHEVKKQELESILLQQEQEKQAKEEKESIKDTDDK) adopt a coiled-coil conformation. Disordered regions lie at residues 23–101 (ILLQ…IEKK), 136–189 (DIRE…RKET), 1022–1054 (ITTTTTTTTTNNNNNNNEVGESTTPNLPITTTT), and 2817–2839 (NNNNNNNRYNTPVRNGNIGRPTR). Positions 28–62 (EQEKQAKEEKESIKDTDDKPIEDTEHSTNNDKPIE) are enriched in basic and acidic residues. Over residues 70–92 (TPTTTTTTKPTDEASSSSNNNNN) the composition is skewed to low complexity. The span at 136-145 (DIREPTDKPF) shows a compositional bias: basic and acidic residues. Positions 146 to 156 (ENTSNIETTRQ) are enriched in polar residues. Residues 167–215 (KTEAERLEQEQKQKQYDENRKETDRKLELELERLKNKKEEVEQIRAYFQ) adopt a coiled-coil conformation. The span at 168 to 189 (TEAERLEQEQKQKQYDENRKET) shows a compositional bias: basic and acidic residues. Over residues 2817-2826 (NNNNNNNRYN) the composition is skewed to low complexity. GTP is bound by residues 2853–2857 (DTAGQ), 2913–2916 (TKAD), and 2976–2983 (GDGGIGKS). 3 disordered regions span residues 3036–3086 (LQSA…LSSR), 3107–3142 (RKSSLVEEESKRQYDDDDESKSESSEYDDDDDQDYE), and 3733–3754 (VIEPSSNVDENSEKVETQPSSS). The segment covering 3070–3086 (PSSSSTRTSVSTSLSSR) has biased composition (low complexity). Positions 3107 to 3120 (RKSSLVEEESKRQY) are enriched in basic and acidic residues. Positions 3121 to 3141 (DDDDESKSESSEYDDDDDQDY) are enriched in acidic residues.

Belongs to the small GTPase superfamily. CpRas family.

In Dictyostelium discoideum (Social amoeba), this protein is Circularly permutated Ras protein 2 (cpras2).